We begin with the raw amino-acid sequence, 642 residues long: 3D-(3,5/4)-trihydroxycyclohexane-1,2-dione hydrolase (642 aa).

Position 71 (E71) interacts with thiamine diphosphate. Positions 446 to 526 (SLPGDVQRIW…INILVFDNSG (81 aa)) are thiamine pyrophosphate binding. Positions 497 and 524 each coordinate Mg(2+).

Belongs to the TPP enzyme family. It depends on Mg(2+) as a cofactor. Thiamine diphosphate serves as cofactor.

The catalysed reaction is 3D-3,5/4-trihydroxycyclohexane-1,2-dione + H2O = 5-deoxy-D-glucuronate + H(+). It participates in polyol metabolism; myo-inositol degradation into acetyl-CoA; acetyl-CoA from myo-inositol: step 3/7. In terms of biological role, involved in the cleavage of the C1-C2 bond of 3D-(3,5/4)-trihydroxycyclohexane-1,2-dione (THcHDO) to yield 5-deoxy-glucuronate (5DG). The polypeptide is 3D-(3,5/4)-trihydroxycyclohexane-1,2-dione hydrolase (Lacticaseibacillus casei (Lactobacillus casei)).